The following is a 239-amino-acid chain: 1-(5-phosphoribosyl)-5-[(5-phosphoribosylamino)methylideneamino] imidazole-4-carboxamide isomerase (239 aa).

The Proton acceptor role is filled by Asp-8. The active-site Proton donor is the Asp-129.

Belongs to the HisA/HisF family.

It localises to the cytoplasm. The enzyme catalyses 1-(5-phospho-beta-D-ribosyl)-5-[(5-phospho-beta-D-ribosylamino)methylideneamino]imidazole-4-carboxamide = 5-[(5-phospho-1-deoxy-D-ribulos-1-ylimino)methylamino]-1-(5-phospho-beta-D-ribosyl)imidazole-4-carboxamide. The protein operates within amino-acid biosynthesis; L-histidine biosynthesis; L-histidine from 5-phospho-alpha-D-ribose 1-diphosphate: step 4/9. In Legionella pneumophila (strain Paris), this protein is 1-(5-phosphoribosyl)-5-[(5-phosphoribosylamino)methylideneamino] imidazole-4-carboxamide isomerase.